The sequence spans 227 residues: Urease accessory protein UreF (227 aa).

This sequence belongs to the UreF family. UreD, UreF and UreG form a complex that acts as a GTP-hydrolysis-dependent molecular chaperone, activating the urease apoprotein by helping to assemble the nickel containing metallocenter of UreC. The UreE protein probably delivers the nickel.

Its subcellular location is the cytoplasm. Its function is as follows. Required for maturation of urease via the functional incorporation of the urease nickel metallocenter. In Bacillus sp. (strain TB-90), this protein is Urease accessory protein UreF.